A 257-amino-acid chain; its full sequence is 1-acyl-sn-glycerol-3-phosphate acyltransferase (257 aa).

A helical membrane pass occupies residues 10–30 (VLFYLLLSASAFVWGTLSFFI). The short motif at 82–87 (HQSTWE) is the HXXXXD motif element. The helical transmembrane segment at 105 to 125 (ELLYVPFFGWALALLKPIAID) threads the bilayer.

It belongs to the 1-acyl-sn-glycerol-3-phosphate acyltransferase family.

The protein localises to the cell inner membrane. The enzyme catalyses a 1-acyl-sn-glycero-3-phosphate + an acyl-CoA = a 1,2-diacyl-sn-glycero-3-phosphate + CoA. It participates in phospholipid metabolism; CDP-diacylglycerol biosynthesis; CDP-diacylglycerol from sn-glycerol 3-phosphate: step 2/3. Converts lysophosphatidic acid (LPA) into phosphatidic acid by incorporating acyl moiety at the 2 position. The sequence is that of 1-acyl-sn-glycerol-3-phosphate acyltransferase from Pseudomonas aeruginosa (strain ATCC 15692 / DSM 22644 / CIP 104116 / JCM 14847 / LMG 12228 / 1C / PRS 101 / PAO1).